The primary structure comprises 372 residues: tRNA-specific 2-thiouridylase MnmA (372 aa).

Residues Gly11–Ser18 and Met37 each bind ATP. Positions Asn97–Asp99 are interaction with target base in tRNA. The active-site Nucleophile is the Cys102. A disulfide bond links Cys102 and Cys199. An ATP-binding site is contributed by Gly126. Residues Lys149 to Gln151 form an interaction with tRNA region. Cys199 functions as the Cysteine persulfide intermediate in the catalytic mechanism. The interval Arg309–Tyr310 is interaction with tRNA.

This sequence belongs to the MnmA/TRMU family.

It is found in the cytoplasm. The enzyme catalyses S-sulfanyl-L-cysteinyl-[protein] + uridine(34) in tRNA + AH2 + ATP = 2-thiouridine(34) in tRNA + L-cysteinyl-[protein] + A + AMP + diphosphate + H(+). In terms of biological role, catalyzes the 2-thiolation of uridine at the wobble position (U34) of tRNA, leading to the formation of s(2)U34. The sequence is that of tRNA-specific 2-thiouridylase MnmA from Staphylococcus aureus (strain USA300).